A 128-amino-acid polypeptide reads, in one-letter code: Small ribosomal subunit protein uS11 (128 aa).

The protein belongs to the universal ribosomal protein uS11 family. In terms of assembly, part of the 30S ribosomal subunit. Interacts with proteins S7 and S18. Binds to IF-3.

In terms of biological role, located on the platform of the 30S subunit, it bridges several disparate RNA helices of the 16S rRNA. Forms part of the Shine-Dalgarno cleft in the 70S ribosome. This is Small ribosomal subunit protein uS11 from Chloroherpeton thalassium (strain ATCC 35110 / GB-78).